Reading from the N-terminus, the 131-residue chain is Small ribosomal subunit protein uS8 (131 aa).

Belongs to the universal ribosomal protein uS8 family. In terms of assembly, part of the 30S ribosomal subunit. Contacts proteins S5 and S12.

Functionally, one of the primary rRNA binding proteins, it binds directly to 16S rRNA central domain where it helps coordinate assembly of the platform of the 30S subunit. The polypeptide is Small ribosomal subunit protein uS8 (Bordetella parapertussis (strain 12822 / ATCC BAA-587 / NCTC 13253)).